Consider the following 428-residue polypeptide: Tyrosine--tRNA ligase (428 aa).

Tyrosine 36 serves as a coordination point for L-tyrosine. Residues 41–50 (PTAPSLHAGH) carry the 'HIGH' region motif. The L-tyrosine site is built by tyrosine 171 and glutamine 175. Residues 231–235 (KFGKS) carry the 'KMSKS' region motif. Lysine 234 contributes to the ATP binding site. Residues 359–416 (DSIVDLLVETGLAASKGAARRNVAEGGVYVNNIRIESDEWIPQHSDFLHERWLVLRRG) form the S4 RNA-binding domain.

Belongs to the class-I aminoacyl-tRNA synthetase family. TyrS type 1 subfamily. Homodimer.

It localises to the cytoplasm. It carries out the reaction tRNA(Tyr) + L-tyrosine + ATP = L-tyrosyl-tRNA(Tyr) + AMP + diphosphate + H(+). Its function is as follows. Catalyzes the attachment of tyrosine to tRNA(Tyr) in a two-step reaction: tyrosine is first activated by ATP to form Tyr-AMP and then transferred to the acceptor end of tRNA(Tyr). This is Tyrosine--tRNA ligase from Mycolicibacterium fortuitum (Mycobacterium fortuitum).